The chain runs to 62 residues: Photosystem II reaction center protein Z (62 aa).

2 consecutive transmembrane segments (helical) span residues 8–28 (SVFA…VALA) and 41–61 (FSGV…NSFI).

This sequence belongs to the PsbZ family. PSII is composed of 1 copy each of membrane proteins PsbA, PsbB, PsbC, PsbD, PsbE, PsbF, PsbH, PsbI, PsbJ, PsbK, PsbL, PsbM, PsbT, PsbY, PsbZ, Psb30/Ycf12, at least 3 peripheral proteins of the oxygen-evolving complex and a large number of cofactors. It forms dimeric complexes.

It is found in the plastid. Its subcellular location is the chloroplast thylakoid membrane. Functionally, may control the interaction of photosystem II (PSII) cores with the light-harvesting antenna, regulates electron flow through the 2 photosystem reaction centers. PSII is a light-driven water plastoquinone oxidoreductase, using light energy to abstract electrons from H(2)O, generating a proton gradient subsequently used for ATP formation. This chain is Photosystem II reaction center protein Z, found in Cryptomeria japonica (Japanese cedar).